We begin with the raw amino-acid sequence, 195 residues long: Sec-independent protein translocase protein TatB (195 aa).

Residues Met-1 to Gly-21 form a helical membrane-spanning segment. Residues Asp-166 to Ser-195 are disordered. Positions Pro-183–Ser-195 are enriched in polar residues.

This sequence belongs to the TatB family. The Tat system comprises two distinct complexes: a TatABC complex, containing multiple copies of TatA, TatB and TatC subunits, and a separate TatA complex, containing only TatA subunits. Substrates initially bind to the TatABC complex, which probably triggers association of the separate TatA complex to form the active translocon.

The protein resides in the cell inner membrane. Part of the twin-arginine translocation (Tat) system that transports large folded proteins containing a characteristic twin-arginine motif in their signal peptide across membranes. Together with TatC, TatB is part of a receptor directly interacting with Tat signal peptides. TatB may form an oligomeric binding site that transiently accommodates folded Tat precursor proteins before their translocation. The sequence is that of Sec-independent protein translocase protein TatB from Actinobacillus pleuropneumoniae serotype 5b (strain L20).